Here is a 282-residue protein sequence, read N- to C-terminus: MTDRYAVFGNPISHSKSPFIHGQFAAPTQESLTYEAILAPVDGFEASLTAFFNAGGKGANVTVPFKEQAFALCDSISPEAKLAGAVNTLSLLADGTIRGDNTDGLGLVADLIANLGSLQDQRVLLIGAGGAARGCILPLLNAEIAQLTISNRTHTKAQLLVDIFTSVDNGAYASKVTAVEMSELAGEFDIIINSTSASLAGELPPLPAHIITTQTVCYDMMYGASVTAFNQWALSQGAAKAIDGLGMLVGQAAKSFTLWRGVEPDTQVVLTLLRDKLMAEPK.

Residues 15–17 and Thr-62 each bind shikimate; that span reads SKS. Lys-66 serves as the catalytic Proton acceptor. Shikimate-binding residues include Asn-87 and Asp-103. NADP(+) is bound by residues 127–131, 151–156, and Met-220; these read GAGGA and NRTHTK. Tyr-222 is a shikimate binding site. NADP(+) is bound at residue Gly-244.

It belongs to the shikimate dehydrogenase family. In terms of assembly, homodimer.

The enzyme catalyses shikimate + NADP(+) = 3-dehydroshikimate + NADPH + H(+). Its pathway is metabolic intermediate biosynthesis; chorismate biosynthesis; chorismate from D-erythrose 4-phosphate and phosphoenolpyruvate: step 4/7. Its function is as follows. Involved in the biosynthesis of the chorismate, which leads to the biosynthesis of aromatic amino acids. Catalyzes the reversible NADPH linked reduction of 3-dehydroshikimate (DHSA) to yield shikimate (SA). This Shewanella baltica (strain OS195) protein is Shikimate dehydrogenase (NADP(+)).